The primary structure comprises 307 residues: D-alanine--D-alanine ligase (307 aa).

Residues 108–301 form the ATP-grasp domain; sequence KEVFAAAGLP…FPEFCAWMVE (194 aa). An ATP-binding site is contributed by 135 to 185; that stretch reads LPPPYVVKPNCEGSSVGVYIVQADANGPPRLAPDMPRDLMVETYIPGRELT. The Mg(2+) site is built by Asp252, Glu268, and Asn270.

The protein belongs to the D-alanine--D-alanine ligase family. It depends on Mg(2+) as a cofactor. Mn(2+) serves as cofactor.

Its subcellular location is the cytoplasm. It catalyses the reaction 2 D-alanine + ATP = D-alanyl-D-alanine + ADP + phosphate + H(+). Its pathway is cell wall biogenesis; peptidoglycan biosynthesis. Functionally, cell wall formation. The protein is D-alanine--D-alanine ligase of Cereibacter sphaeroides (strain ATCC 17025 / ATH 2.4.3) (Rhodobacter sphaeroides).